We begin with the raw amino-acid sequence, 206 residues long: Protease (206 aa).

Residues His-55, Asp-72, and Cys-122 contribute to the active site.

The protein belongs to the peptidase C5 family. Interacts with protease cofactor pVI-C; this interaction is necessary for protease activation.

It is found in the virion. Its subcellular location is the host nucleus. It carries out the reaction Cleaves proteins of the adenovirus and its host cell at two consensus sites: -Yaa-Xaa-Gly-Gly-|-Xaa- and -Yaa-Xaa-Gly-Xaa-|-Gly- (in which Yaa is Met, Ile or Leu, and Xaa is any amino acid).. With respect to regulation, requires DNA and protease cofactor for maximal activation. Inside nascent virions, becomes partially activated by binding to the viral DNA, allowing it to cleave the cofactor that binds to the protease and fully activates it. Actin, like the viral protease cofactor, seems to act as a cofactor in the cleavage of cytokeratin 18 and of actin itself. Functionally, cleaves viral precursor proteins (pTP, pIIIa, pVI, pVII, pVIII, and pX) inside newly assembled particles giving rise to mature virions. Protease complexed to its cofactor slides along the viral DNA to specifically locate and cleave the viral precursors. Mature virions have a weakened organization compared to the unmature virions, thereby facilitating subsequent uncoating. Without maturation, the particle lacks infectivity and is unable to uncoat. Late in adenovirus infection, in the cytoplasm, may participate in the cytoskeleton destruction. Cleaves host cell cytoskeletal keratins K7 and K18. This chain is Protease, found in Fowl adenovirus A serotype 1 (strain CELO / Phelps) (FAdV-1).